We begin with the raw amino-acid sequence, 303 residues long: Glycine--tRNA ligase alpha subunit (303 aa).

This sequence belongs to the class-II aminoacyl-tRNA synthetase family. As to quaternary structure, tetramer of two alpha and two beta subunits.

It is found in the cytoplasm. The enzyme catalyses tRNA(Gly) + glycine + ATP = glycyl-tRNA(Gly) + AMP + diphosphate. The protein is Glycine--tRNA ligase alpha subunit of Salmonella agona (strain SL483).